A 400-amino-acid polypeptide reads, in one-letter code: CinA-like protein (400 aa).

This sequence belongs to the CinA family.

The chain is CinA-like protein from Escherichia coli (strain SE11).